Reading from the N-terminus, the 205-residue chain is Ras-like protein 3 (205 aa).

16 to 23 (GGGGVGKS) serves as a coordination point for GTP. The Effector region signature appears at 38 to 46 (YDPTIEDSY). GTP-binding positions include 63–67 (DTAGQ) and 122–125 (NKCD). Residue Cys-202 is modified to Cysteine methyl ester. A lipid anchor (S-farnesyl cysteine) is attached at Cys-202. A propeptide spans 203–205 (ILM) (removed in mature form).

The protein belongs to the small GTPase superfamily. Ras family.

It localises to the cell membrane. The enzyme catalyses GTP + H2O = GDP + phosphate + H(+). Alternates between an inactive form bound to GDP and an active form bound to GTP. Activated by a guanine nucleotide-exchange factor (GEF) and inactivated by a GTPase-activating protein (GAP). The protein is Ras-like protein 3 (RAS3) of Mucor circinelloides f. lusitanicus (Mucor racemosus var. lusitanicus).